Reading from the N-terminus, the 127-residue chain is Small ribosomal subunit protein eS8 (127 aa).

Belongs to the eukaryotic ribosomal protein eS8 family. As to quaternary structure, part of the 30S ribosomal subunit.

This chain is Small ribosomal subunit protein eS8, found in Nanoarchaeum equitans (strain Kin4-M).